A 462-amino-acid chain; its full sequence is Probable acid phosphatase SPBC4.06 (462 aa).

The Nucleophile role is filled by histidine 35. Residue aspartate 330 is the Proton donor of the active site.

Belongs to the histidine acid phosphatase family.

Its subcellular location is the mitochondrion. The catalysed reaction is a phosphate monoester + H2O = an alcohol + phosphate. The polypeptide is Probable acid phosphatase SPBC4.06 (Schizosaccharomyces pombe (strain 972 / ATCC 24843) (Fission yeast)).